The sequence spans 383 residues: Chaperone protein DnaJ (383 aa).

The J domain maps to 6 to 70 (DYYDVLGVGR…QKRAAYDQYG (65 aa)). The CR-type zinc-finger motif lies at 140–222 (GKETKISYSR…CHGTGREEER (83 aa)). Zn(2+)-binding residues include Cys153, Cys156, Cys170, Cys173, Cys196, Cys199, Cys210, and Cys213. 4 CXXCXGXG motif repeats span residues 153–160 (CHTCHGSG), 170–177 (CHKCHGAG), 196–203 (CDVCGGTG), and 210–217 (CDTCHGTG).

Belongs to the DnaJ family. In terms of assembly, homodimer. Zn(2+) is required as a cofactor.

It localises to the cytoplasm. Functionally, participates actively in the response to hyperosmotic and heat shock by preventing the aggregation of stress-denatured proteins and by disaggregating proteins, also in an autonomous, DnaK-independent fashion. Unfolded proteins bind initially to DnaJ; upon interaction with the DnaJ-bound protein, DnaK hydrolyzes its bound ATP, resulting in the formation of a stable complex. GrpE releases ADP from DnaK; ATP binding to DnaK triggers the release of the substrate protein, thus completing the reaction cycle. Several rounds of ATP-dependent interactions between DnaJ, DnaK and GrpE are required for fully efficient folding. Also involved, together with DnaK and GrpE, in the DNA replication of plasmids through activation of initiation proteins. This is Chaperone protein DnaJ from Latilactobacillus sakei (Lactobacillus sakei).